A 387-amino-acid chain; its full sequence is 3-ketoacyl-CoA thiolase (387 aa).

The active-site Acyl-thioester intermediate is Cys-91. Active-site proton acceptor residues include His-343 and Cys-373.

This sequence belongs to the thiolase-like superfamily. Thiolase family. As to quaternary structure, heterotetramer of two alpha chains (FadB) and two beta chains (FadA).

The protein resides in the cytoplasm. It carries out the reaction an acyl-CoA + acetyl-CoA = a 3-oxoacyl-CoA + CoA. The protein operates within lipid metabolism; fatty acid beta-oxidation. In terms of biological role, catalyzes the final step of fatty acid oxidation in which acetyl-CoA is released and the CoA ester of a fatty acid two carbons shorter is formed. In Shigella flexneri serotype 5b (strain 8401), this protein is 3-ketoacyl-CoA thiolase.